Here is a 249-residue protein sequence, read N- to C-terminus: Triosephosphate isomerase (249 aa).

9–11 (NWK) is a binding site for substrate. His94 (electrophile) is an active-site residue. Glu166 functions as the Proton acceptor in the catalytic mechanism. Substrate contacts are provided by residues Gly172, Ser211, and 232–233 (GG).

The protein belongs to the triosephosphate isomerase family. As to quaternary structure, homodimer.

Its subcellular location is the cytoplasm. The enzyme catalyses D-glyceraldehyde 3-phosphate = dihydroxyacetone phosphate. Its pathway is carbohydrate biosynthesis; gluconeogenesis. It participates in carbohydrate degradation; glycolysis; D-glyceraldehyde 3-phosphate from glycerone phosphate: step 1/1. Functionally, involved in the gluconeogenesis. Catalyzes stereospecifically the conversion of dihydroxyacetone phosphate (DHAP) to D-glyceraldehyde-3-phosphate (G3P). The protein is Triosephosphate isomerase of Chromohalobacter salexigens (strain ATCC BAA-138 / DSM 3043 / CIP 106854 / NCIMB 13768 / 1H11).